A 197-amino-acid polypeptide reads, in one-letter code: Putative mediator of RNA polymerase II transcription subunit 9 (197 aa).

Residues 83–117 (GINRSLENQEELLKTYKQTLKKKVELLEKLKKLEI) are a coiled coil. A compositionally biased stretch (polar residues) spans 126-144 (STSSQSPQIQSKLELQTEL). A disordered region spans residues 126–197 (STSSQSPQIQ…KETTEDIMKE (72 aa)). Residues 145–182 (SQTEPSQTEPSQTEPSQTEPSQTESSQIESSQIESSQT) are compositionally biased toward low complexity. The segment covering 183–197 (ETEKSKETTEDIMKE) has biased composition (basic and acidic residues).

The protein belongs to the Mediator complex subunit 9 family. In terms of assembly, component of the Mediator complex.

Its subcellular location is the nucleus. In terms of biological role, component of the Mediator complex, a coactivator involved in the regulated transcription of nearly all RNA polymerase II-dependent genes. Mediator functions as a bridge to convey information from gene-specific regulatory proteins to the basal RNA polymerase II transcription machinery. Mediator is recruited to promoters by direct interactions with regulatory proteins and serves as a scaffold for the assembly of a functional preinitiation complex with RNA polymerase II and the general transcription factors. The polypeptide is Putative mediator of RNA polymerase II transcription subunit 9 (med9) (Dictyostelium discoideum (Social amoeba)).